The primary structure comprises 150 residues: D-aminoacyl-tRNA deacylase (150 aa).

The Gly-cisPro motif, important for rejection of L-amino acids motif lies at 138–139 (GP).

Belongs to the DTD family. In terms of assembly, homodimer.

The protein resides in the cytoplasm. It carries out the reaction glycyl-tRNA(Ala) + H2O = tRNA(Ala) + glycine + H(+). The enzyme catalyses a D-aminoacyl-tRNA + H2O = a tRNA + a D-alpha-amino acid + H(+). In terms of biological role, an aminoacyl-tRNA editing enzyme that deacylates mischarged D-aminoacyl-tRNAs. Also deacylates mischarged glycyl-tRNA(Ala), protecting cells against glycine mischarging by AlaRS. Acts via tRNA-based rather than protein-based catalysis; rejects L-amino acids rather than detecting D-amino acids in the active site. By recycling D-aminoacyl-tRNA to D-amino acids and free tRNA molecules, this enzyme counteracts the toxicity associated with the formation of D-aminoacyl-tRNA entities in vivo and helps enforce protein L-homochirality. This is D-aminoacyl-tRNA deacylase from Petrotoga mobilis (strain DSM 10674 / SJ95).